A 639-amino-acid chain; its full sequence is MPAWSLLVLSALPVVGMFAGQTTFFSSPWETLFGTAAEQHEAAMDGRIQGRGLLSSHFGWYGWPGQTFDYVIVGGGTAGLAMAHRLSEDGSNSVAVIEAGGFYEIEAGNATEVPMFLFNYFFDNGHVKNPLFDWYQYTEAQPGLAGRKMFYMQGKTLGGSTARGAMLYHRGSKGAYQLWADRVGDDSYTWDNWLPFFKKSVQFSGPLTNPRPANATASNDVSAFAATAEEEGPVQVAYPYLTNAISSWVDKALEKMGFPEAQGFSNGQLLGRSYITHTIHPKTRRRDTASTSYLQTALRTSNSLNVITHTLVKKIDFDEEKRATGVVVNTGGFEWQIGAKKEVILSAGVMRSPQLLMVSGLGPRETLEKLDIPVLSDLPGVGQNMQDTIILGPTNPVKVESHSQLMGSKETLPRSIYEYNNFRTGLLTNPGQDYFAFEKHQPGNLSEATAADIDKAFPADWPTFSYIALDDTFVPQYDGKNYFSMSAALLATFSRGTVTINTTNTADNPVVDPRWLDDPRDKEMAVAAFRRCREIVASETMQQVIDGPELLPGFEYQTDEEILNYIAETSDAYYAGVGTCAMGKPDDPLAVLDSKARVRGVKGLRVVDASAFPFAIDGQPMATVYALAEKVAADIIAGN.

Residues 1-19 (MPAWSLLVLSALPVVGMFA) form the signal peptide. Residues 77-78 (TA) and 98-99 (EA) contribute to the FAD site. Asn109 is a glycosylation site (N-linked (GlcNAc...) asparagine). 164–167 (GAML) serves as a coordination point for FAD. Asn214 is a glycosylation site (N-linked (GlcNAc...) asparagine). The 39-residue stretch at 263-301 (GFSNGQLLGRSYITHTIHPKTRRRDTASTSYLQTALRTS) folds into the PAS domain. Residues Asn444 and Asn501 are each glycosylated (N-linked (GlcNAc...) asparagine). Residues Ala609 and 620-621 (PM) each bind FAD.

It belongs to the GMC oxidoreductase family. In terms of assembly, homodimer. The cofactor is FAD.

The protein localises to the cytoplasm. It localises to the cytosol. The enzyme catalyses (2S-3S)-versiconal hemiacetal = versicolorin B + H2O. It catalyses the reaction (S)-5'-oxoaverantin + H(+) = (1'S,5'S)-averufin + H2O. It participates in mycotoxin biosynthesis; sterigmatocystin biosynthesis. In terms of biological role, norsolorinic acid reductase; part of the gene cluster that mediates the biosynthesis of sterigmatocystin (ST), a polyketide-derived furanocoumarin which is part of the most toxic and carcinogenic compounds among the known mycotoxins. The first step in the biosynthesis of sterigmatocystin is the production of hexanoate by the fatty acid synthase (FAS) units stcJ and stcK. The polyketide backbone is assembled by the non-reducing polyketide synthase stcA by condensation of the starter hexanoyl-CoA and 7 malonyl-CoA extender units followed by cyclization and release of norsolorinic acid. Norsolorinic acid is the first stable intermediate in the biosynthesis of sterigmatocystin and is converted into averantin (AVN) by the ketoreductase stcE which reduces the hexanoate ketone to an alcohol. Averantin is then oxidized into 5'-hydroxyaverantin (HAVN) by the cytochrome P450 monooxygenase stcF. 5'-hydroxyaverantin is further converted to 5'-oxyaverantin (OAVN) by the 5'-hydroxyaverantin dehydrogenase stcG. The next step is the conversion of OAVN into averufin (AVF) which is catalyzed by a yet to be identified enzyme. The cytochrome P450 monooxygenase stcB and the flavin-binding monooxygenase stcW are both required for the conversion of averufin to 1-hydroxyversicolorone. The esterase stcI probably catalyzes the formation of versiconal hemiacetal acetate from 1-hydroxyversicolorone. The oxydoreductase stcN then probably catalyzes the biosynthetic step from versiconal to versicolorin B (VERB). The next step is performed by the versicolorin B desaturase stcL to produce versicolorin A (VERA). The ketoreductase stcU and the cytochrome P450 monooxygenase stcS are involved in the conversion of versicolorin A to demethylsterigmatocystin. The Baeyer-Villiger oxidas stcQ and the reductase stcR might be involved in the biosynthetic step from versicolorin A to demethylsterigmatocystin. The final step in the biosynthesis of sterigmatocystin is the methylation of demethylsterigmatocystin catalyzed by the methyltransferase stcP. This chain is Versicolorin B synthase stcN, found in Emericella nidulans (strain FGSC A4 / ATCC 38163 / CBS 112.46 / NRRL 194 / M139) (Aspergillus nidulans).